A 638-amino-acid chain; its full sequence is Phosphomethylpyrimidine synthase (638 aa).

Residues Asn235, Met264, Tyr293, His329, 349–351 (SRG), 390–393 (DGLR), and Glu429 each bind substrate. Residue His433 participates in Zn(2+) binding. Residue Tyr456 participates in substrate binding. Residue His497 coordinates Zn(2+). [4Fe-4S] cluster contacts are provided by Cys577, Cys580, and Cys585.

Belongs to the ThiC family. In terms of assembly, homodimer. [4Fe-4S] cluster is required as a cofactor.

It catalyses the reaction 5-amino-1-(5-phospho-beta-D-ribosyl)imidazole + S-adenosyl-L-methionine = 4-amino-2-methyl-5-(phosphooxymethyl)pyrimidine + CO + 5'-deoxyadenosine + formate + L-methionine + 3 H(+). The protein operates within cofactor biosynthesis; thiamine diphosphate biosynthesis. Its function is as follows. Catalyzes the synthesis of the hydroxymethylpyrimidine phosphate (HMP-P) moiety of thiamine from aminoimidazole ribotide (AIR) in a radical S-adenosyl-L-methionine (SAM)-dependent reaction. This Polaromonas naphthalenivorans (strain CJ2) protein is Phosphomethylpyrimidine synthase.